The sequence spans 200 residues: Probable molybdenum cofactor guanylyltransferase (200 aa).

GTP is bound by residues 9-11 (LAG), Lys-21, Asp-69, and Asp-100. Asp-100 provides a ligand contact to Mg(2+).

The protein belongs to the MobA family. Mg(2+) is required as a cofactor.

It is found in the cytoplasm. It carries out the reaction Mo-molybdopterin + GTP + H(+) = Mo-molybdopterin guanine dinucleotide + diphosphate. Transfers a GMP moiety from GTP to Mo-molybdopterin (Mo-MPT) cofactor (Moco or molybdenum cofactor) to form Mo-molybdopterin guanine dinucleotide (Mo-MGD) cofactor. The protein is Probable molybdenum cofactor guanylyltransferase of Bacillus cereus (strain ATCC 10987 / NRS 248).